Consider the following 734-residue polypeptide: Photosystem I P700 chlorophyll a apoprotein A2 (734 aa).

8 helical membrane-spanning segments follow: residues 46 to 69 (IFAS…FHVA), 135 to 158 (LYTG…LHLQ), 175 to 199 (LNHH…HVAI), 273 to 291 (IAHH…GHMY), 330 to 353 (IHFQ…QHMY), 369 to 395 (AALY…IFFI), 417 to 439 (AIIS…LYVH), and 517 to 535 (FLVH…LILV). [4Fe-4S] cluster-binding residues include Cys559 and Cys568. Transmembrane regions (helical) follow at residues 575–596 (AFYL…YWHW) and 643–665 (LSVW…MFLI). Chlorophyll a contacts are provided by His654, Met662, and Tyr670. Residue Trp671 coordinates phylloquinone. The chain crosses the membrane as a helical span at residues 707–727 (LVGLAHFSVGYIFTYAAFLIA).

It belongs to the PsaA/PsaB family. In terms of assembly, the PsaA/B heterodimer binds the P700 chlorophyll special pair and subsequent electron acceptors. PSI consists of a core antenna complex that captures photons, and an electron transfer chain that converts photonic excitation into a charge separation. The eukaryotic PSI reaction center is composed of at least 11 subunits. P700 is a chlorophyll a/chlorophyll a' dimer, A0 is one or more chlorophyll a, A1 is one or both phylloquinones and FX is a shared 4Fe-4S iron-sulfur center. is required as a cofactor.

Its subcellular location is the plastid. The protein localises to the chloroplast thylakoid membrane. It catalyses the reaction reduced [plastocyanin] + hnu + oxidized [2Fe-2S]-[ferredoxin] = oxidized [plastocyanin] + reduced [2Fe-2S]-[ferredoxin]. Functionally, psaA and PsaB bind P700, the primary electron donor of photosystem I (PSI), as well as the electron acceptors A0, A1 and FX. PSI is a plastocyanin-ferredoxin oxidoreductase, converting photonic excitation into a charge separation, which transfers an electron from the donor P700 chlorophyll pair to the spectroscopically characterized acceptors A0, A1, FX, FA and FB in turn. Oxidized P700 is reduced on the lumenal side of the thylakoid membrane by plastocyanin. The sequence is that of Photosystem I P700 chlorophyll a apoprotein A2 from Eucalyptus globulus subsp. globulus (Tasmanian blue gum).